The primary structure comprises 288 residues: MKTIFEALKWASSYLTEAGREENAAELLLLYDTGMERSKLLASLQEPIGEDELYRFKRHVEMHKEGVPVQYIIGKEFFYGREFMVNDDVLIPRPETEEVVFHLLEKYRSVFSEDGKLEVVDVGTGSGAIAVTLALENQSFSVSAVDISKEALQVASANAEKLGANVRFYQGDLLEPFIKAGKKADIIVSNPPYISEEEMADLSEIVRFHEPLHALTDGGDGLKFYKRFMEDIPLVMKDKVFVVFEIGWKQGAAVKDLILKAFKGAEVEVLKDINGKDRTICALIHKNK.

S-adenosyl-L-methionine is bound by residues 123–127 (GTGSG), D146, and N190. Residue 190 to 193 (NPPY) participates in substrate binding.

Belongs to the protein N5-glutamine methyltransferase family. PrmC subfamily.

The catalysed reaction is L-glutaminyl-[peptide chain release factor] + S-adenosyl-L-methionine = N(5)-methyl-L-glutaminyl-[peptide chain release factor] + S-adenosyl-L-homocysteine + H(+). In terms of biological role, methylates the class 1 translation termination release factors RF1/PrfA and RF2/PrfB on the glutamine residue of the universally conserved GGQ motif. The protein is Release factor glutamine methyltransferase of Bacillus subtilis (strain 168).